We begin with the raw amino-acid sequence, 546 residues long: Protein FAM124A (546 aa).

3 disordered regions span residues 1 to 37 (MDPKAGGGGEEDDCVDSGAETGGSDYSHLSSTSSELS), 285 to 361 (KFPK…QRSK), and 488 to 546 (SSSS…EFYI). Residues 24 to 36 (SDYSHLSSTSSEL) are compositionally biased toward low complexity. The segment covering 285-302 (KFPKPGRVHHSSEKKRHS) has biased composition (basic residues). Polar residues-rich tracts occupy residues 304 to 324 (PLPSTAVPSHTPGSSQQSPLN) and 347 to 361 (ANSTPNPPWSFQRSK). The segment covering 488-511 (SSSSATARAAPPAPSTSTLTDSSP) has biased composition (low complexity).

Belongs to the FAM124 family.

This is Protein FAM124A (FAM124A) from Pongo abelii (Sumatran orangutan).